A 461-amino-acid chain; its full sequence is Putative cytochrome P450 132 (461 aa).

Position 409 (C409) interacts with heme.

The protein belongs to the cytochrome P450 family. Heme is required as a cofactor.

This chain is Putative cytochrome P450 132 (cyp132), found in Mycobacterium tuberculosis (strain ATCC 25618 / H37Rv).